Here is a 418-residue protein sequence, read N- to C-terminus: Glutamyl-tRNA reductase (418 aa).

Residues 49-52, Ser109, 114-116, and Gln120 contribute to the substrate site; these read TCNR and EPQ. Cys50 functions as the Nucleophile in the catalytic mechanism. 189–194 contacts NADP(+); it reads GAGETI.

Belongs to the glutamyl-tRNA reductase family. As to quaternary structure, homodimer.

It catalyses the reaction (S)-4-amino-5-oxopentanoate + tRNA(Glu) + NADP(+) = L-glutamyl-tRNA(Glu) + NADPH + H(+). It participates in porphyrin-containing compound metabolism; protoporphyrin-IX biosynthesis; 5-aminolevulinate from L-glutamyl-tRNA(Glu): step 1/2. In terms of biological role, catalyzes the NADPH-dependent reduction of glutamyl-tRNA(Glu) to glutamate 1-semialdehyde (GSA). This Salmonella choleraesuis (strain SC-B67) protein is Glutamyl-tRNA reductase.